The primary structure comprises 443 residues: Exodeoxyribonuclease 7 large subunit (443 aa).

The protein belongs to the XseA family. In terms of assembly, heterooligomer composed of large and small subunits.

The protein localises to the cytoplasm. It carries out the reaction Exonucleolytic cleavage in either 5'- to 3'- or 3'- to 5'-direction to yield nucleoside 5'-phosphates.. Functionally, bidirectionally degrades single-stranded DNA into large acid-insoluble oligonucleotides, which are then degraded further into small acid-soluble oligonucleotides. This Vibrio vulnificus (strain YJ016) protein is Exodeoxyribonuclease 7 large subunit.